Consider the following 418-residue polypeptide: Putative ion-transport protein YfeO (418 aa).

12 helical membrane passes run Leu10 to Val30, Asp54 to Ile74, Ala99 to Pro119, Glu120 to Pro140, Ile149 to Ile169, Leu186 to Pro206, Ile223 to Cys243, Val258 to Val278, Asp300 to Phe320, Gly322 to His342, Val343 to Val363, and Leu371 to Met391.

It belongs to the chloride channel (TC 2.A.49) family.

The protein resides in the cell membrane. In Escherichia coli O127:H6 (strain E2348/69 / EPEC), this protein is Putative ion-transport protein YfeO.